The primary structure comprises 275 residues: Ribosomal RNA small subunit methyltransferase A (275 aa).

The S-adenosyl-L-methionine site is built by asparagine 28, leucine 30, glycine 55, glutamate 77, aspartate 103, and asparagine 123.

The protein belongs to the class I-like SAM-binding methyltransferase superfamily. rRNA adenine N(6)-methyltransferase family. RsmA subfamily.

It localises to the cytoplasm. It carries out the reaction adenosine(1518)/adenosine(1519) in 16S rRNA + 4 S-adenosyl-L-methionine = N(6)-dimethyladenosine(1518)/N(6)-dimethyladenosine(1519) in 16S rRNA + 4 S-adenosyl-L-homocysteine + 4 H(+). Functionally, specifically dimethylates two adjacent adenosines (A1518 and A1519) in the loop of a conserved hairpin near the 3'-end of 16S rRNA in the 30S particle. May play a critical role in biogenesis of 30S subunits. The polypeptide is Ribosomal RNA small subunit methyltransferase A (Allorhizobium ampelinum (strain ATCC BAA-846 / DSM 112012 / S4) (Agrobacterium vitis (strain S4))).